The sequence spans 125 residues: Small ribosomal subunit protein uS12 (125 aa).

The tract at residues 1–31 is disordered; it reads MPTINQLVRQGREVETTKSKSPAMQNSPQRR. Positions 19 to 29 are enriched in polar residues; it reads SKSPAMQNSPQ. Residue Asp89 is modified to 3-methylthioaspartic acid.

The protein belongs to the universal ribosomal protein uS12 family. Part of the 30S ribosomal subunit. Contacts proteins S8 and S17. May interact with IF1 in the 30S initiation complex.

With S4 and S5 plays an important role in translational accuracy. In terms of biological role, interacts with and stabilizes bases of the 16S rRNA that are involved in tRNA selection in the A site and with the mRNA backbone. Located at the interface of the 30S and 50S subunits, it traverses the body of the 30S subunit contacting proteins on the other side and probably holding the rRNA structure together. The combined cluster of proteins S8, S12 and S17 appears to hold together the shoulder and platform of the 30S subunit. The polypeptide is Small ribosomal subunit protein uS12 (Paracidovorax citrulli (strain AAC00-1) (Acidovorax citrulli)).